A 364-amino-acid chain; its full sequence is Aminomethyltransferase (364 aa).

Belongs to the GcvT family. The glycine cleavage system is composed of four proteins: P, T, L and H.

It carries out the reaction N(6)-[(R)-S(8)-aminomethyldihydrolipoyl]-L-lysyl-[protein] + (6S)-5,6,7,8-tetrahydrofolate = N(6)-[(R)-dihydrolipoyl]-L-lysyl-[protein] + (6R)-5,10-methylene-5,6,7,8-tetrahydrofolate + NH4(+). Functionally, the glycine cleavage system catalyzes the degradation of glycine. This chain is Aminomethyltransferase, found in Shewanella sp. (strain MR-4).